The sequence spans 307 residues: Metapyrocatechase (307 aa).

2 VOC domains span residues 7-122 and 150-269; these read RPGH…LYAD and RFDH…VFCG. Fe cation contacts are provided by His153, His214, and Glu265.

This sequence belongs to the extradiol ring-cleavage dioxygenase family. As to quaternary structure, homotetramer. Fe(2+) is required as a cofactor.

It carries out the reaction catechol + O2 = (2Z,4E)-2-hydroxy-6-oxohexa-2,4-dienoate + H(+). It functions in the pathway aromatic compound metabolism; benzoate degradation via hydroxylation. The polypeptide is Metapyrocatechase (dmpB) (Pseudomonas sp. (strain CF600)).